The sequence spans 710 residues: Exocyst complex component 5 (710 aa).

The stretch at 44–96 (DTFIQTIKDLKILQEKQQSKCERLEESLRQEKESHAKKIAKLQERHQTAIDVF) forms a coiled coil.

Belongs to the SEC10 family. The exocyst complex is composed of Sec3/Exoc1, Sec5/Exoc2, Sec6/Exoc3, Sec8/Exoc4, Sec10/Exoc5, Sec15/Exoc6, Exo70/Exoc7 and Exo84/Exoc8.

Its function is as follows. Component of the exocyst complex involved in the docking of exocytic vesicles with fusion sites on the plasma membrane. The polypeptide is Exocyst complex component 5 (Drosophila melanogaster (Fruit fly)).